We begin with the raw amino-acid sequence, 415 residues long: Probable G-protein coupled receptor 19 (415 aa).

At 1–69 (MVFAHRMDND…LNPGEVATAS (69 aa)) the chain is on the extracellular side. N25 and N52 each carry an N-linked (GlcNAc...) asparagine glycan. Residues 70 to 90 (IFFGALWLFSIFGNSLVCLVI) form a helical membrane-spanning segment. Over 91-102 (HRSRRTQSTTNY) the chain is Cytoplasmic. The helical transmembrane segment at 103 to 123 (FVVSMACADLLISVASTPFVV) threads the bilayer. Topologically, residues 124-152 (LQFTTGRWTLGSAMCKVVRYFQYLTPGVQ) are extracellular. C138 and C210 are joined by a disulfide. Residues 153 to 173 (IYVLLSICIDRFYTIVYPLSF) traverse the membrane as a helical segment. At 174 to 182 (KVSREKAKK) the chain is on the cytoplasmic side. The chain crosses the membrane as a helical span at residues 183 to 203 (MIAASWILDAAFVTPVFFFYG). Residues 204 to 221 (SNWDSHCNYFLPPSWEGT) are Extracellular-facing. Residues 222–242 (AYTVIHFLVGFVIPSILIILF) form a helical membrane-spanning segment. Residues 243–277 (YQKVIKYIWRIGTDGRTLRRTMNIVPRTKVKTVKM) are Cytoplasmic-facing. The chain crosses the membrane as a helical span at residues 278–298 (FLLLNLVFLFSWLPFHVAQLW). At 299-309 (HPHEQDYKKSS) the chain is on the extracellular side. Residues 310 to 332 (LVFTAVTWVSFSSSASKPTLYSI) form a helical membrane-spanning segment. Topologically, residues 333 to 415 (YNANFRRGMK…INSNPPNTFV (83 aa)) are cytoplasmic.

The protein belongs to the G-protein coupled receptor 1 family. As to expression, strongly expressed in the brain.

Its subcellular location is the cell membrane. Its function is as follows. G-protein coupled receptor that plays a role in the regulation of circadian rhythms and energy metabolism. Participates in maintaining proper circadian gene expression in the suprachiasmatic nucleus (SCN), the locus of the master circadian clock in the brain. May function as a coordinator of aging-associated metabolic dysfunction, stress response, DNA integrity management, and eventual senescence. Upon binding to adropin, modulates mitochondrial energy metabolism via the p44/42-PDK4 signaling pathway, influencing pyruvate dehydrogenase activity. This chain is Probable G-protein coupled receptor 19 (Gpr19), found in Mus musculus (Mouse).